A 392-amino-acid polypeptide reads, in one-letter code: Selenide, water dikinase 1 (392 aa).

The active site involves C31. Residues K32, 67 to 69 (GMD), D87, D110, and 161 to 164 (GGQT) contribute to the ATP site. Residue D69 coordinates Mg(2+). D110 contributes to the Mg(2+) binding site. A Mg(2+)-binding site is contributed by D265.

This sequence belongs to the selenophosphate synthase 1 family. Class II subfamily. In terms of assembly, homodimer. Mg(2+) is required as a cofactor.

The protein resides in the cell membrane. Its subcellular location is the nucleus membrane. It catalyses the reaction hydrogenselenide + ATP + H2O = selenophosphate + AMP + phosphate + 2 H(+). Synthesizes selenophosphate from selenide and ATP. This Xenopus laevis (African clawed frog) protein is Selenide, water dikinase 1 (sephs1).